Consider the following 155-residue polypeptide: MSNQNGKTKLITDNRQARFLYEILETYEAGIELTGTEVKSIRAGRINLKDGYALIRNGEAWLINVHISPYEASGQYFNHDPRRTRKLLLHRKEINKLIGQVEQKGLTLVPLKMYFKDSWVKVSIGLAQGKKLHDKRETLKRRQDERDMQRAMKRW.

This sequence belongs to the SmpB family.

It is found in the cytoplasm. Required for rescue of stalled ribosomes mediated by trans-translation. Binds to transfer-messenger RNA (tmRNA), required for stable association of tmRNA with ribosomes. tmRNA and SmpB together mimic tRNA shape, replacing the anticodon stem-loop with SmpB. tmRNA is encoded by the ssrA gene; the 2 termini fold to resemble tRNA(Ala) and it encodes a 'tag peptide', a short internal open reading frame. During trans-translation Ala-aminoacylated tmRNA acts like a tRNA, entering the A-site of stalled ribosomes, displacing the stalled mRNA. The ribosome then switches to translate the ORF on the tmRNA; the nascent peptide is terminated with the 'tag peptide' encoded by the tmRNA and targeted for degradation. The ribosome is freed to recommence translation, which seems to be the essential function of trans-translation. The polypeptide is SsrA-binding protein (Gloeothece citriformis (strain PCC 7424) (Cyanothece sp. (strain PCC 7424))).